Reading from the N-terminus, the 260-residue chain is Acetylglutamate kinase (260 aa).

Substrate contacts are provided by residues 46–47 (GG), R68, and N160.

This sequence belongs to the acetylglutamate kinase family. ArgB subfamily.

The protein localises to the cytoplasm. It catalyses the reaction N-acetyl-L-glutamate + ATP = N-acetyl-L-glutamyl 5-phosphate + ADP. Its pathway is amino-acid biosynthesis; L-arginine biosynthesis; N(2)-acetyl-L-ornithine from L-glutamate: step 2/4. In terms of biological role, catalyzes the ATP-dependent phosphorylation of N-acetyl-L-glutamate. The polypeptide is Acetylglutamate kinase (Shewanella sp. (strain MR-7)).